The chain runs to 136 residues: Small ribosomal subunit protein uS9 (136 aa).

The tract at residues 97–136 (SPDNRKPLKTEGHLSRDPRAKERRKYGLKKARKAPQFSKR) is disordered. The segment covering 98 to 116 (PDNRKPLKTEGHLSRDPRA) has biased composition (basic and acidic residues). Residues 117-136 (KERRKYGLKKARKAPQFSKR) show a composition bias toward basic residues.

The protein belongs to the universal ribosomal protein uS9 family.

This is Small ribosomal subunit protein uS9 from Prochlorococcus marinus (strain MIT 9312).